A 1252-amino-acid chain; its full sequence is LRR receptor-like serine/threonine-protein kinase GSO2 (1252 aa).

The N-terminal stretch at M1 to G22 is a signal peptide. Over Q23 to V876 the chain is Extracellular. N-linked (GlcNAc...) asparagine glycosylation is found at N62, N77, and N117. LRR repeat units follow at residues F94–L118, S120–L143, V144–N166, V168–R190, L191–C215, S217–L239, K240–L263, S265–E286, L287–R310, and N312–N335. N157 carries N-linked (GlcNAc...) asparagine glycosylation. N214 and N229 each carry an N-linked (GlcNAc...) asparagine glycan. N299 carries an N-linked (GlcNAc...) asparagine glycan. A glycan (N-linked (GlcNAc...) asparagine) is linked at N336. 21 LRR repeats span residues T337–C360, Q361–L384, E386–L408, T409–G433, L435–C456, T457–L480, K481–C504, Q506–L528, T529–L552, N554–S575, S577–S599, T600–K622, I623–K648, L650–K670, L671–L695, N697–L719, Q720–L743, K745–L767, Q768–L792, P793–M816, and S818–R839. 3 N-linked (GlcNAc...) asparagine glycosylation sites follow: N370, N394, and N407. Residue N455 is glycosylated (N-linked (GlcNAc...) asparagine). N538, N554, N559, and N566 each carry an N-linked (GlcNAc...) asparagine glycan. N-linked (GlcNAc...) asparagine glycosylation occurs at N709. N780 carries N-linked (GlcNAc...) asparagine glycosylation. N823 carries an N-linked (GlcNAc...) asparagine glycan. The helical transmembrane segment at I877–F897 threads the bilayer. Residues F898–K1252 are Cytoplasmic-facing. T945 carries the post-translational modification Phosphothreonine. The region spanning L948–L1232 is the Protein kinase domain. ATP contacts are provided by residues I954–V962 and K976. Phosphotyrosine occurs at positions 1024 and 1066. D1079 functions as the Proton acceptor in the catalytic mechanism. S1114 carries the post-translational modification Phosphoserine. Phosphotyrosine is present on residues Y1124 and Y1131.

The protein belongs to the protein kinase superfamily. Ser/Thr protein kinase family. As to quaternary structure, interacts with CIF1 and CIF2. Mostly expressed in siliques, seeds, developing embryos and seedlings, detected in flower buds, but not in roots, leaves or stems.

Its subcellular location is the cell membrane. It carries out the reaction L-seryl-[protein] + ATP = O-phospho-L-seryl-[protein] + ADP + H(+). It catalyses the reaction L-threonyl-[protein] + ATP = O-phospho-L-threonyl-[protein] + ADP + H(+). Together with GSO1, receptor-like serine/threonine-kinase required during the development of the epidermal surface in embryos and cotyledons. Involved in the nuclear division phase of megagametogenesis. In coordination with GSO2, regulates root growth through control of cell division and cell fate specification. Controls seedling root growth by modulating sucrose response after germination. Receptor of the peptide hormones CIF1 and CIF2 required for contiguous Casparian strip diffusion barrier formation in roots. This is LRR receptor-like serine/threonine-protein kinase GSO2 from Arabidopsis thaliana (Mouse-ear cress).